Consider the following 577-residue polypeptide: Arginine--tRNA ligase (577 aa).

Positions 122–132 (PNVAKEMHVGH) match the 'HIGH' region motif.

Belongs to the class-I aminoacyl-tRNA synthetase family. Monomer.

It localises to the cytoplasm. The catalysed reaction is tRNA(Arg) + L-arginine + ATP = L-arginyl-tRNA(Arg) + AMP + diphosphate. This Vibrio vulnificus (strain YJ016) protein is Arginine--tRNA ligase.